Consider the following 145-residue polypeptide: Mediator of RNA polymerase II transcription subunit 21 (145 aa).

Positions 79–112 (EESTAALQAASLRQLEEENQEAAARLEEVVYRGD) form a coiled coil.

This sequence belongs to the Mediator complex subunit 21 family. In terms of assembly, component of the Mediator complex.

The protein resides in the nucleus. Its function is as follows. Component of the Mediator complex, a coactivator involved in the regulated transcription of nearly all RNA polymerase II-dependent genes. Mediator functions as a bridge to convey information from gene-specific regulatory proteins to the basal RNA polymerase II transcription machinery. Mediator is recruited to promoters by direct interactions with regulatory proteins and serves as a scaffold for the assembly of a functional preinitiation complex with RNA polymerase II and the general transcription factors. The chain is Mediator of RNA polymerase II transcription subunit 21 (med21) from Danio rerio (Zebrafish).